A 298-amino-acid chain; its full sequence is 1,2-dihydroxynaphthalene dioxygenase (298 aa).

2 VOC domains span residues Glu-6 to Gly-121 and Gly-146 to Gly-267. His-149 is a Fe cation binding site. Substrate contacts are provided by residues His-149, Gln-196 to His-197, His-212, and Tyr-253. His-212 provides a ligand contact to Fe cation. Glu-263 contacts Fe cation.

It belongs to the extradiol ring-cleavage dioxygenase family. In terms of assembly, homooctamer. Fe(2+) is required as a cofactor.

The catalysed reaction is naphthalene-1,2-diol + O2 = 2-hydroxychromene-2-carboxylate + H(+). Its pathway is aromatic compound metabolism; naphthalene degradation. Its function is as follows. Involved in the naphthalene and naphthalenesulfonate catabolic pathway. Catalyzes the meta-cleavage of 1,2-dihydroxynaphthalene (1,2-DHN) to yield 2-hydroxychromene-2-carboxylic acid. Can also cleave 1,2,5-trihydroxynaphthalene (1,2,5-THN), 1,2,6-trihydroxynaphthalene (1,2,6-THN), 1,2,7-trihydroxynaphthalene (1,2,7-THN), 2,3-dihydroxybiphenyl, 3,4-dihydroxybiphenyl, catechol, 3-methylcatechol and 4-methylcatechol. The polypeptide is 1,2-dihydroxynaphthalene dioxygenase (nsaC) (Sphingobium xenophagum).